The chain runs to 239 residues: MEGVMSEAPQSSIRKKEYEARMSRIRSRQEKEFRERKSANARYAEETTEKLLNKYYEQEREILEKKSSMKNGFYVPKEAEFFAVILIRSKCNCPPKVRKVLELFRLKRINTCVLVRNNKSTRKMLQIIKDHVAFGTIGMELLRKLVYTKGSGRNGHVRVKLTNEFIEDMFDGKIRCIEELVHHIYNGTEMFKKVNSFLYPFHLSPPRGGFKGQKSKSFNDGGSVGNHQDLLSNLLERMI.

Residues Met-1–Met-22 are disordered.

The protein belongs to the universal ribosomal protein uL30 family.

This chain is Large ribosomal subunit protein uL30 (RPL7), found in Encephalitozoon cuniculi (strain GB-M1) (Microsporidian parasite).